The primary structure comprises 48 residues: Protein PsbN (48 aa).

A helical transmembrane segment spans residues 12 to 34 (LLIAMVTITFGLTGYGLYTAFGP).

It belongs to the PsbN family.

The protein localises to the cellular thylakoid membrane. In terms of biological role, may play a role in photosystem I and II biogenesis. The protein is Protein PsbN of Prochlorococcus marinus (strain MIT 9313).